We begin with the raw amino-acid sequence, 905 residues long: Probable aromatic-L-amino-acid decarboxylase (905 aa).

The interval 250-296 (YLNPIIKTPPHNERVPKMKTNISKTRKKKGKVSDASKDSRPSETKKE) is disordered. A compositionally biased stretch (basic and acidic residues) spans 280-296 (KVSDASKDSRPSETKKE). Positions 492 and 591 each coordinate pyridoxal 5'-phosphate. Residue Lys648 is modified to N6-(pyridoxal phosphate)lysine. The tract at residues 861–905 (HTAEYADPPGKSNKSPQVAAKGELPSAAPPSSRTPNSDISEKSDR) is disordered. The span at 889–898 (PPSSRTPNSD) shows a compositional bias: polar residues.

The protein belongs to the group II decarboxylase family. Homodimer. The cofactor is pyridoxal 5'-phosphate.

It carries out the reaction L-dopa + H(+) = dopamine + CO2. The catalysed reaction is 5-hydroxy-L-tryptophan + H(+) = serotonin + CO2. Its pathway is catecholamine biosynthesis; dopamine biosynthesis; dopamine from L-tyrosine: step 2/2. Functionally, catalyzes the decarboxylation of L-3,4-dihydroxyphenylalanine (DOPA) to dopamine, L-5-hydroxytryptophan to serotonin and L-tryptophan to tryptamine. The polypeptide is Probable aromatic-L-amino-acid decarboxylase (hdl-1) (Caenorhabditis elegans).